Here is a 122-residue protein sequence, read N- to C-terminus: Succinate dehydrogenase assembly factor 2, mitochondrial (122 aa).

This sequence belongs to the SDHAF2 family. As to quaternary structure, interacts with the flavoprotein subunit within the SDH catalytic dimer.

The protein resides in the mitochondrion matrix. Plays an essential role in the assembly of succinate dehydrogenase (SDH), an enzyme complex (also referred to as respiratory complex II) that is a component of both the tricarboxylic acid (TCA) cycle and the mitochondrial electron transport chain, and which couples the oxidation of succinate to fumarate with the reduction of ubiquinone (coenzyme Q) to ubiquinol. Required for flavinylation (covalent attachment of FAD) of the flavoprotein subunit of the SDH catalytic dimer. The polypeptide is Succinate dehydrogenase assembly factor 2, mitochondrial (Caenorhabditis briggsae).